Here is a 320-residue protein sequence, read N- to C-terminus: Beta-carotene ketolase (320 aa).

It carries out the reaction all-trans-beta-carotene + 2 AH2 + 2 O2 = echinenone + 2 A + 3 H2O. It catalyses the reaction echinenone + 2 AH2 + 2 O2 = canthaxanthin + 2 A + 3 H2O. Its pathway is carotenoid biosynthesis; astaxanthin biosynthesis. Its function is as follows. Converts beta-carotene to canthaxanthin via echinenone. This chain is Beta-carotene ketolase, found in Haematococcus lacustris (Green alga).